Consider the following 723-residue polypeptide: ABC transporter F family member 4 (723 aa).

A disordered region spans residues 1–117 (MGKKKSDESA…KEQKKREAKE (117 aa)). Basic and acidic residues predominate over residues 18–31 (SGKDASKDSKKEKL). The span at 50–65 (GSSSRTKAAPKSTSYT) shows a compositional bias: polar residues. Residues 72–84 (PSDEEDDGESDEE) show a composition bias toward acidic residues. Over residues 95 to 117 (KSEQRHLEISVTDKEQKKREAKE) the composition is skewed to basic and acidic residues. The region spanning 163-423 (ITIESFSVSA…EMNKKFDVYD (261 aa)) is the ABC transporter 1 domain. 195–202 (GPNGMGKS) is an ATP binding site. 2 disordered regions span residues 256-275 (LQKS…DDDD) and 427-472 (KAAK…APEA). A compositionally biased stretch (acidic residues) spans 266-275 (ENVDGEDDDD). Residues 437–446 (QQEKVKDRAK) show a composition bias toward basic and acidic residues. Residues 496 to 721 (LQLIEVSFSY…DLQREIKAEV (226 aa)) enclose the ABC transporter 2 domain. 530–537 (GPNGAGKS) contributes to the ATP binding site.

It belongs to the ABC transporter superfamily. ABCF family. EF3 (TC 3.A.1.121) subfamily.

The sequence is that of ABC transporter F family member 4 (ABCF4) from Arabidopsis thaliana (Mouse-ear cress).